We begin with the raw amino-acid sequence, 552 residues long: HTH-type transcriptional regulator SgrR (552 aa).

Residues 1 to 116 (MPSGRLQQQF…LISHLGRSFR (116 aa)) enclose the HTH marR-type domain. Positions 26–49 (LNELADLLNCSRRHMRTLLNTMQA) form a DNA-binding region, H-T-H motif. The tract at residues 163 to 493 (ELEADIAHHW…RDWQDDAAQW (331 aa)) is solute-binding.

Its function is as follows. Activates the small RNA gene sgrS under glucose-phosphate stress conditions as well as yfdZ. Represses its own transcription under both stress and non-stress conditions. Might act as a sensor of the intracellular accumulation of phosphoglucose by binding these molecules in its C-terminal solute-binding domain. This Salmonella choleraesuis (strain SC-B67) protein is HTH-type transcriptional regulator SgrR.